The primary structure comprises 454 residues: Bifunctional protein GlmU (454 aa).

Residues 1 to 231 are pyrophosphorylase; that stretch reads MDRATVSLIV…EAETLGVNTR (231 aa). UDP-N-acetyl-alpha-D-glucosamine contacts are provided by residues 11–14, K25, Q78, 83–84, 106–108, G143, E157, N172, and N229; these read LAAG, GT, and YGD. A Mg(2+)-binding site is contributed by D108. Position 229 (N229) interacts with Mg(2+). Positions 232-252 are linker; the sequence is AQLAEAEAEFQKRARAAALED. The segment at 253 to 454 is N-acetyltransferase; the sequence is GVTLTAPDTV…AKAAKKKEAP (202 aa). 2 residues coordinate UDP-N-acetyl-alpha-D-glucosamine: R318 and K336. H348 serves as the catalytic Proton acceptor. Positions 351 and 362 each coordinate UDP-N-acetyl-alpha-D-glucosamine. Residues A365, 371–372, S390, S408, and R425 contribute to the acetyl-CoA site; that span reads NY.

This sequence in the N-terminal section; belongs to the N-acetylglucosamine-1-phosphate uridyltransferase family. The protein in the C-terminal section; belongs to the transferase hexapeptide repeat family. In terms of assembly, homotrimer. Mg(2+) is required as a cofactor.

Its subcellular location is the cytoplasm. The enzyme catalyses alpha-D-glucosamine 1-phosphate + acetyl-CoA = N-acetyl-alpha-D-glucosamine 1-phosphate + CoA + H(+). It carries out the reaction N-acetyl-alpha-D-glucosamine 1-phosphate + UTP + H(+) = UDP-N-acetyl-alpha-D-glucosamine + diphosphate. It functions in the pathway nucleotide-sugar biosynthesis; UDP-N-acetyl-alpha-D-glucosamine biosynthesis; N-acetyl-alpha-D-glucosamine 1-phosphate from alpha-D-glucosamine 6-phosphate (route II): step 2/2. It participates in nucleotide-sugar biosynthesis; UDP-N-acetyl-alpha-D-glucosamine biosynthesis; UDP-N-acetyl-alpha-D-glucosamine from N-acetyl-alpha-D-glucosamine 1-phosphate: step 1/1. The protein operates within bacterial outer membrane biogenesis; LPS lipid A biosynthesis. In terms of biological role, catalyzes the last two sequential reactions in the de novo biosynthetic pathway for UDP-N-acetylglucosamine (UDP-GlcNAc). The C-terminal domain catalyzes the transfer of acetyl group from acetyl coenzyme A to glucosamine-1-phosphate (GlcN-1-P) to produce N-acetylglucosamine-1-phosphate (GlcNAc-1-P), which is converted into UDP-GlcNAc by the transfer of uridine 5-monophosphate (from uridine 5-triphosphate), a reaction catalyzed by the N-terminal domain. The polypeptide is Bifunctional protein GlmU (Cereibacter sphaeroides (strain ATCC 17023 / DSM 158 / JCM 6121 / CCUG 31486 / LMG 2827 / NBRC 12203 / NCIMB 8253 / ATH 2.4.1.) (Rhodobacter sphaeroides)).